Reading from the N-terminus, the 169-residue chain is Putative pre-16S rRNA nuclease (169 aa).

The span at 1-19 shows a compositional bias: basic and acidic residues; that stretch reads MTDSDHRLPDRPGEGDPGR. A disordered region spans residues 1 to 22; it reads MTDSDHRLPDRPGEGDPGRGRR.

Belongs to the YqgF nuclease family.

The protein resides in the cytoplasm. Functionally, could be a nuclease involved in processing of the 5'-end of pre-16S rRNA. The protein is Putative pre-16S rRNA nuclease of Mycobacterium sp. (strain JLS).